The following is a 161-amino-acid chain: 3-isopropylmalate dehydratase small subunit 1 (161 aa).

This sequence belongs to the LeuD family. LeuD type 2 subfamily. Heterodimer of LeuC and LeuD.

It catalyses the reaction (2R,3S)-3-isopropylmalate = (2S)-2-isopropylmalate. The protein operates within amino-acid biosynthesis; L-leucine biosynthesis; L-leucine from 3-methyl-2-oxobutanoate: step 2/4. Its function is as follows. Catalyzes the isomerization between 2-isopropylmalate and 3-isopropylmalate, via the formation of 2-isopropylmaleate. The polypeptide is 3-isopropylmalate dehydratase small subunit 1 (leuD1) (Archaeoglobus fulgidus (strain ATCC 49558 / DSM 4304 / JCM 9628 / NBRC 100126 / VC-16)).